The primary structure comprises 188 residues: uncharacterized protein (188 aa).

Belongs to the isochorismatase family.

This is an uncharacterized protein from Escherichia coli O157:H7.